Reading from the N-terminus, the 427-residue chain is Cyclin-L1-1 (427 aa).

Residues 258-427 form a disordered region; that stretch reads HRRTSDTNAS…SRDKDRHRRQ (170 aa). Polar residues predominate over residues 263–276; it reads DTNASKESPATTVA. Basic and acidic residues-rich tracts occupy residues 289–311, 328–382, 390–400, and 407–421; these read QEKD…DDGK, KSEK…DRDR, DRSSGYSDKEK, and RDRG…SRDK.

Belongs to the cyclin family. Cyclin L subfamily.

This Oryza sativa subsp. japonica (Rice) protein is Cyclin-L1-1 (CYCL1-1).